The following is a 485-amino-acid chain: Aspartyl/glutamyl-tRNA(Asn/Gln) amidotransferase subunit B (485 aa).

Belongs to the GatB/GatE family. GatB subfamily. Heterotrimer of A, B and C subunits.

It catalyses the reaction L-glutamyl-tRNA(Gln) + L-glutamine + ATP + H2O = L-glutaminyl-tRNA(Gln) + L-glutamate + ADP + phosphate + H(+). The enzyme catalyses L-aspartyl-tRNA(Asn) + L-glutamine + ATP + H2O = L-asparaginyl-tRNA(Asn) + L-glutamate + ADP + phosphate + 2 H(+). Allows the formation of correctly charged Asn-tRNA(Asn) or Gln-tRNA(Gln) through the transamidation of misacylated Asp-tRNA(Asn) or Glu-tRNA(Gln) in organisms which lack either or both of asparaginyl-tRNA or glutaminyl-tRNA synthetases. The reaction takes place in the presence of glutamine and ATP through an activated phospho-Asp-tRNA(Asn) or phospho-Glu-tRNA(Gln). The sequence is that of Aspartyl/glutamyl-tRNA(Asn/Gln) amidotransferase subunit B from Paramagnetospirillum magneticum (strain ATCC 700264 / AMB-1) (Magnetospirillum magneticum).